Here is a 428-residue protein sequence, read N- to C-terminus: D-inositol 3-phosphate glycosyltransferase (428 aa).

Residue H5 coordinates 1D-myo-inositol 3-phosphate. Residues 11 to 12 and G19 contribute to the UDP-N-acetyl-alpha-D-glucosamine site; that span reads QP. 1D-myo-inositol 3-phosphate contacts are provided by residues 16-21, K74, Y107, T131, and R151; that span reads DAGGMN. UDP-N-acetyl-alpha-D-glucosamine contacts are provided by R225, K230, and Q283. 3 residues coordinate Mg(2+): F292, Q293, and A295. Positions 305 and 313 each coordinate UDP-N-acetyl-alpha-D-glucosamine. T319 is a Mg(2+) binding site.

This sequence belongs to the glycosyltransferase group 1 family. MshA subfamily. In terms of assembly, homodimer.

It catalyses the reaction 1D-myo-inositol 3-phosphate + UDP-N-acetyl-alpha-D-glucosamine = 1D-myo-inositol 2-acetamido-2-deoxy-alpha-D-glucopyranoside 3-phosphate + UDP + H(+). Catalyzes the transfer of a N-acetyl-glucosamine moiety to 1D-myo-inositol 3-phosphate to produce 1D-myo-inositol 2-acetamido-2-deoxy-glucopyranoside 3-phosphate in the mycothiol biosynthesis pathway. The polypeptide is D-inositol 3-phosphate glycosyltransferase (Mycobacterium leprae (strain Br4923)).